The chain runs to 67 residues: DNA-directed RNA polymerase subunit omega (67 aa).

Belongs to the RNA polymerase subunit omega family. In terms of assembly, the RNAP catalytic core consists of 2 alpha, 1 beta, 1 beta' and 1 omega subunit. When a sigma factor is associated with the core the holoenzyme is formed, which can initiate transcription.

It catalyses the reaction RNA(n) + a ribonucleoside 5'-triphosphate = RNA(n+1) + diphosphate. Its function is as follows. Promotes RNA polymerase assembly. Latches the N- and C-terminal regions of the beta' subunit thereby facilitating its interaction with the beta and alpha subunits. The chain is DNA-directed RNA polymerase subunit omega from Acidovorax ebreus (strain TPSY) (Diaphorobacter sp. (strain TPSY)).